The following is a 230-amino-acid chain: Broad-specificity phosphatase YOR283W (230 aa).

His-24 functions as the Tele-phosphohistidine intermediate in the catalytic mechanism. Substrate contacts are provided by residues 36–37 (QG) and 102–105 (ERYM). Residue Glu-102 is the Proton donor/acceptor of the active site.

The protein belongs to the phosphoglycerate mutase family. BPG-dependent PGAM subfamily.

The protein resides in the cytoplasm. It localises to the nucleus. Metal-independent phosphatase active against a broad range of phosphorylated substrates including nucleoside tri- and diphosphates, phosphorylated organic acids, and amino acids. Shows no activity against phytic acid, phosphorylated carbohydrates, and nucleoside monophosphates. The protein is Broad-specificity phosphatase YOR283W of Saccharomyces cerevisiae (strain ATCC 204508 / S288c) (Baker's yeast).